The following is a 190-amino-acid chain: Small ribosomal subunit protein uS5 (190 aa).

The S5 DRBM domain occupies 22-85; it reads FVDKLVHINR…ESAKRNLTRV (64 aa).

The protein belongs to the universal ribosomal protein uS5 family. Part of the 30S ribosomal subunit. Contacts proteins S4 and S8.

Its function is as follows. With S4 and S12 plays an important role in translational accuracy. In terms of biological role, located at the back of the 30S subunit body where it stabilizes the conformation of the head with respect to the body. This Rhodopseudomonas palustris (strain BisB18) protein is Small ribosomal subunit protein uS5.